The sequence spans 530 residues: Nectin-2 (530 aa).

Positions 1 to 31 (MARAAVLPPSRLSPTLPLLPLLLLLLQETGA) are cleaved as a signal peptide. An Ig-like V-type domain is found at 32 to 147 (QDVRVRVLPE…NGTRRGVTWL (116 aa)). At 32 to 351 (QDVRVRVLPE…STAGAGATGG (320 aa)) the chain is on the extracellular side. A disulfide bond links C54 and C131. Residues N128 and N138 are each glycosylated (N-linked (GlcNAc...) asparagine). 2 consecutive Ig-like C2-type domains span residues 153-247 (PENH…VTLS) and 252-337 (PEVS…VILV). 2 cysteine pairs are disulfide-bonded: C174-C229 and C274-C320. N-linked (GlcNAc...) asparagine glycosylation occurs at N315. Residues 352–372 (IIGGIIAAIIATAVAGTGILI) form a helical membrane-spanning segment. Over 373 to 530 (CRQQRKEQRL…DFFVSRAMYV (158 aa)) the chain is Cytoplasmic. A disordered region spans residues 382-407 (LQAADEEEELEGPPSYKPPTPKAKLE). T401 is modified (phosphothreonine). S424 carries the phosphoserine modification.

This sequence belongs to the nectin family. In terms of assembly, can form trans-heterodimers with NECTIN3. Interacts with CD226 or with PVRIG; these interactions are competitive and have a differential functional outcome on T-cell activation, either positive or negative, respectively. Binds with low affinity to TIGIT. As to expression, brain, spinal cord, spleen, kidney, heart and liver.

It localises to the cell membrane. Its function is as follows. Modulator of T-cell signaling. Can be either a costimulator of T-cell function, or a coinhibitor, depending on the receptor it binds to. Upon binding to CD226, stimulates T-cell proliferation and cytokine production, including that of IL2, IL5, IL10, IL13, and IFNG. Upon interaction with PVRIG, inhibits T-cell proliferation. These interactions are competitive. Probable cell adhesion protein. This is Nectin-2 from Mus musculus (Mouse).